A 237-amino-acid polypeptide reads, in one-letter code: 5'-methylthioadenosine/S-adenosylhomocysteine nucleosidase (237 aa).

Glu12 (proton acceptor) is an active-site residue. Substrate is bound by residues Ala78, Ile152, and 173–174 (ME). Catalysis depends on Asp197, which acts as the Proton donor.

This sequence belongs to the PNP/UDP phosphorylase family. MtnN subfamily. As to quaternary structure, homodimer.

The catalysed reaction is S-adenosyl-L-homocysteine + H2O = S-(5-deoxy-D-ribos-5-yl)-L-homocysteine + adenine. It carries out the reaction S-methyl-5'-thioadenosine + H2O = 5-(methylsulfanyl)-D-ribose + adenine. The enzyme catalyses 5'-deoxyadenosine + H2O = 5-deoxy-D-ribose + adenine. It participates in amino-acid biosynthesis; L-methionine biosynthesis via salvage pathway; S-methyl-5-thio-alpha-D-ribose 1-phosphate from S-methyl-5'-thioadenosine (hydrolase route): step 1/2. Catalyzes the irreversible cleavage of the glycosidic bond in both 5'-methylthioadenosine (MTA) and S-adenosylhomocysteine (SAH/AdoHcy) to adenine and the corresponding thioribose, 5'-methylthioribose and S-ribosylhomocysteine, respectively. Also cleaves 5'-deoxyadenosine, a toxic by-product of radical S-adenosylmethionine (SAM) enzymes, into 5-deoxyribose and adenine. Thus, is required for in vivo function of the radical SAM enzymes biotin synthase and lipoic acid synthase, that are inhibited by 5'-deoxyadenosine accumulation. In Hamiltonella defensa subsp. Acyrthosiphon pisum (strain 5AT), this protein is 5'-methylthioadenosine/S-adenosylhomocysteine nucleosidase.